The primary structure comprises 218 residues: Small ribosomal subunit protein uS7m (218 aa).

The N-terminal 19 residues, 1–19 (MSLLGRIAEKTSRLSCLRL), are a transit peptide targeting the mitochondrion.

This sequence belongs to the universal ribosomal protein uS7 family. Component of the mitochondrial ribosome small subunit (28S) which comprises a 12S rRNA and about 30 distinct proteins.

It localises to the mitochondrion. The sequence is that of Small ribosomal subunit protein uS7m (mRpS7) from Drosophila melanogaster (Fruit fly).